The sequence spans 185 residues: Guanylate kinase (185 aa).

A Guanylate kinase-like domain is found at 4 to 181 (GALYVVSGPS…ACNDLISIIE (178 aa)). 11 to 18 (GPSGAGKS) is an ATP binding site.

This sequence belongs to the guanylate kinase family.

Its subcellular location is the cytoplasm. The catalysed reaction is GMP + ATP = GDP + ADP. Its function is as follows. Essential for recycling GMP and indirectly, cGMP. In Fusobacterium nucleatum subsp. nucleatum (strain ATCC 25586 / DSM 15643 / BCRC 10681 / CIP 101130 / JCM 8532 / KCTC 2640 / LMG 13131 / VPI 4355), this protein is Guanylate kinase.